The primary structure comprises 198 residues: ATP-dependent Clp protease proteolytic subunit 1 (198 aa).

S98 functions as the Nucleophile in the catalytic mechanism. The active site involves H123.

The protein belongs to the peptidase S14 family. Fourteen ClpP subunits assemble into 2 heptameric rings which stack back to back to give a disk-like structure with a central cavity, resembling the structure of eukaryotic proteasomes.

Its subcellular location is the cytoplasm. It catalyses the reaction Hydrolysis of proteins to small peptides in the presence of ATP and magnesium. alpha-casein is the usual test substrate. In the absence of ATP, only oligopeptides shorter than five residues are hydrolyzed (such as succinyl-Leu-Tyr-|-NHMec, and Leu-Tyr-Leu-|-Tyr-Trp, in which cleavage of the -Tyr-|-Leu- and -Tyr-|-Trp bonds also occurs).. Functionally, cleaves peptides in various proteins in a process that requires ATP hydrolysis. Has a chymotrypsin-like activity. Plays a major role in the degradation of misfolded proteins. ClpXP1 is involved in the complete degradation of the Site-2 clipped anti-sigma-W factor RsiW. This results in the release of SigW and the transcription activation of the genes under the control of the sigma-W factor. This Bacillus licheniformis (strain ATCC 14580 / DSM 13 / JCM 2505 / CCUG 7422 / NBRC 12200 / NCIMB 9375 / NCTC 10341 / NRRL NRS-1264 / Gibson 46) protein is ATP-dependent Clp protease proteolytic subunit 1.